An 859-amino-acid chain; its full sequence is Toll-like receptor 5 (859 aa).

The signal sequence occupies residues 1–26 (MACQLDLLIGVIFMASPVLVISPCSS). The Extracellular segment spans residues 27 to 641 (DGRIAFFRGC…EEEAMRSLKF (615 aa)). Residues Asn37, Asn46, and Asn84 are each glycosylated (N-linked (GlcNAc...) asparagine). 9 LRR repeats span residues 45 to 69 (LNTTTERLLLSFNYISMVVATSFPL), 72 to 94 (RLQLLELGTQYANLTIGPGAFRN), 96 to 118 (PNLRILDLGQSQIEVLNRDAFQG), 121 to 144 (HLLELRLFSCGLSSAVLSDGYFRN), 147 to 167 (SLARLDLSGNQIHSLRLHSSF), 172 to 193 (SLSDVNFAFNQIFTICEDELEP), 198 to 212 (TLSFFGLKLTKLFSR), 215 to 230 (VGWETCRNPFRGVRLE), and 235 to 236 (SE). Residue Asn246 is glycosylated (N-linked (GlcNAc...) asparagine). 6 LRR repeats span residues 261 to 285 (LKHHIMGPGFGFQNIRDPDQSTFAS), 290 to 302 (SVLQLDLSHGFIF), 314 to 335 (DLKMLNLAFNKINKIGENAFYG), 338 to 356 (SLQVLNLSYNLLGELYNSN), 386 to 402 (TLQTLDLRDNALKAIGF), and 413 to 432 (GNKLVHLPHIHFTANFLELS). The N-linked (GlcNAc...) asparagine glycan is linked to Asn343. Asn438 carries N-linked (GlcNAc...) asparagine glycosylation. 5 LRR repeats span residues 450–471 (QLQFLILNQNRLSSCKAAHTPS), 475–496 (SLEQLFLTENMLQLAWETGLCW), 504–525 (RLQILYLSNNYLNFLPPGIFND), 528–547 (ALRMLSLSANKLTVLSPGSL), and 550–568 (NLEILDISRNQLLCPDPAL). An LRRCT domain is found at 580 to 632 (NEFVCNCELSTFISWLNQTNVTLFGSPADVYCMYPNSLLGGSLYNISTEDCDE). Disulfide bonds link Cys584–Cys611 and Cys586–Cys630. Asn596, Asn599, and Asn624 each carry an N-linked (GlcNAc...) asparagine glycan. The chain crosses the membrane as a helical span at residues 642–662 (SLFILCTVTLTLFLVITLVVI). The Cytoplasmic portion of the chain corresponds to 663–859 (KFRGICFLCY…IQLRTIATIS (197 aa)). The region spanning 692-837 (YRYDAYFCFS…WFLDKLSGCI (146 aa)) is the TIR domain. Tyr799 carries the phosphotyrosine modification.

It belongs to the Toll-like receptor family. Homodimer. Interacts with MYD88 (via TIR domain). Interacts with TICAM1 (via TIR domain). Interacts with UNC93B1; this interaction is essential for proper TLR5 localization to the plasma membrane. Post-translationally, phosphorylated at Tyr-799 upon flagellin binding; required for signaling. Highly expressed in liver. Detected in lung and at very low levels in most other tissues.

The protein resides in the membrane. In terms of biological role, pattern recognition receptor (PRR) located on the cell surface that participates in the activation of innate immunity and inflammatory response. Recognizes small molecular motifs named pathogen-associated molecular pattern (PAMPs) expressed by pathogens and microbe-associated molecular patterns (MAMPs) usually expressed by resident microbiota. Upon ligand binding such as bacterial flagellins, recruits intracellular adapter proteins MYD88 and TRIF leading to NF-kappa-B activation, cytokine secretion and induction of the inflammatory response. Plays thereby an important role in the relationship between the intestinal epithelium and enteric microbes and contributes to the gut microbiota composition throughout life. The chain is Toll-like receptor 5 (Tlr5) from Mus musculus (Mouse).